The primary structure comprises 699 residues: MSSMPVHIERPAELTAKQRLQLEKKVRSMKYADLAVQGTNTSSIASKRSVERLYADVLGTKVQGSNGQPREYFKYFVSKPLRRSPCINRGYWLRLMAIRTSLRCIAEGTGQRDILVVNLGCGYDPLPFQLLDHTDDAQSEFDDRMSFVDVDYPDLIAKKLEIVKNTPELQHILGGAAGDAAGPVVYRTAKYMAAACDLNDSAAFGALTESFHPRSDEVVVFIAEVSLAYMRPERADAIIEACGRIPNSHFILLEQLLPAGEHSPFSRTMLSHFKSNDSPLQSVSSYPTISEQEVRFKRLGFKNVNAGDMHQLWRSLDKELVSKVQAVEPFDELEEFYLFCHHYIIAHATNDLSFRFGPKYAFPQVPQSPSKSCSSNSPMELVTAVDTDLLQRKFGASVVVDSDTILFSFGCLHNKLENILVMGDHDGAFKISKGPAPPARMCHTFTKLDDRTIFLVGGRQSPTKPLGDAWLLKLRDGEWHWEMCAPLMYPRFRHNCVNVGKGKALIYGGETDGATFLIYDCESNTYYEPVYPRTFPRKVSAAMCYDFQSNRGYILGGALDNMEVDDTLCTFAFDARTNSIEILETSSHPLYQRYGAKSVVREAGHMLIVGGVSPHMLFNDTTSIIEVELTTNKVNCLQIPSSLWKNHAQLLVGFELQIMSDGTVLIFGGGAVCYGFGAAWNGILRLGRETIAAIPLRIL.

S-adenosyl-L-methionine contacts are provided by residues Arg94, Gly120, Asp151, 197 to 198, and Glu224; that span reads DL.

This sequence belongs to the methyltransferase superfamily. LCMT family.

The catalysed reaction is 7-[(3S)-3-amino-3-carboxypropyl]wyosine(37) in tRNA(Phe) + S-adenosyl-L-methionine = 7-[(3S)-(3-amino-3-methoxycarbonyl)propyl]wyosine(37) in tRNA(Phe) + S-adenosyl-L-homocysteine. It catalyses the reaction 7-[(3S)-(3-amino-3-methoxycarbonyl)propyl]wyosine(37) in tRNA(Phe) + S-adenosyl-L-methionine + CO2 = wybutosine(37) in tRNA(Phe) + S-adenosyl-L-homocysteine + 2 H(+). The protein operates within tRNA modification; wybutosine-tRNA(Phe) biosynthesis. In terms of biological role, probable S-adenosyl-L-methionine-dependent methyltransferase that acts as a component of the wybutosine biosynthesis pathway. Wybutosine is a hyper modified guanosine with a tricyclic base found at the 3'-position adjacent to the anticodon of eukaryotic phenylalanine tRNA. May methylate the carboxyl group of leucine residues to form alpha-leucine ester residues. In Eremothecium gossypii (strain ATCC 10895 / CBS 109.51 / FGSC 9923 / NRRL Y-1056) (Yeast), this protein is tRNA wybutosine-synthesizing protein 4 (PPM2).